The primary structure comprises 86 residues: Putative membrane protein insertion efficiency factor (86 aa).

Belongs to the UPF0161 family.

It is found in the cell inner membrane. Its function is as follows. Could be involved in insertion of integral membrane proteins into the membrane. This is Putative membrane protein insertion efficiency factor from Haemophilus influenzae (strain 86-028NP).